Consider the following 414-residue polypeptide: WD repeat-containing protein jip5 (414 aa).

WD repeat units lie at residues 9–48 (PLSA…SSDD), 73–112 (RHKG…VENK), 118–159 (AKDG…SNVS), 222–263 (VSSV…DQDE), and 319–356 (DETE…NDMD). Residues 39–65 (RLPSEESSDDDDGTASNSSARNGKGHI) are disordered. Residues 357 to 414 (VDMAGGKRMFGGDSDDSDDDNDSEDSEQEQRQPVEPQRKRKKNKGKGKRDIIAFADID) are disordered. A compositionally biased stretch (acidic residues) spans 369–383 (DSDDSDDDNDSEDSE). Residues 394–403 (RKRKKNKGKG) show a composition bias toward basic residues.

Belongs to the WD repeat WDR55 family.

It is found in the nucleus. The protein resides in the nucleolus. In Aspergillus clavatus (strain ATCC 1007 / CBS 513.65 / DSM 816 / NCTC 3887 / NRRL 1 / QM 1276 / 107), this protein is WD repeat-containing protein jip5 (jip5).